Reading from the N-terminus, the 1114-residue chain is MLRGTMTAWRGMRPEVTLACLLLATAGCFADLNEVPQVTVQPASTVQKPGGTVILGCVVEPPRMNVTWRLNGKELNGSDDALGVLITHGTLVITALNNHTVGRYQCVARMPAGAVASVPATVTLANLQDFKLDVQHVIEVDEGNTAVIACHLPESHPKAQVRYSVKQEWLEASRGNYLIMPSGNLQIVNASQEDEGMYKCAAYNPVTQEVKTSGSSDRLRVRRSTAEAARIIYPPEAQTIIVTKGQSLILECVASGIPPPRVTWAKDGSSVTGYNKTRFLLSNLLIDTTSEEDSGTYRCMADNGVGQPGAAVILYNVQVFEPPEVTMELSQLVIPWGQSAKLTCEVRGNPPPSVLWLRNAVPLISSQRLRLSRRALRVLSMGPEDEGVYQCMAENEVGSAHAVVQLRTSRPSITPRLWQDAELATGTPPVSPSKLGNPEQMLRGQPALPRPPTSVGPASPQCPGEKGQGAPAEAPIILSSPRTSKTDSYELVWRPRHEGSGRAPILYYVVKHRKVTNSSDDWTISGIPANQHRLTLTRLDPGSLYEVEMAAYNCAGEGQTAMVTFRTGRRPKPEIMASKEQQIQRDDPGASPQSSSQPDHGRLSPPEAPDRPTISTASETSVYVTWIPRGNGGFPIQSFRVEYKKLKKVGDWILATSAIPPSRLSVEITGLEKGTSYKFRVRALNMLGESEPSAPSRPYVVSGYSGRVYERPVAGPYITFTDAVNETTIMLKWMYIPASNNNTPIHGFYIYYRPTDSDNDSDYKKDMVEGDKYWHSISHLQPETSYDIKMQCFNEGGESEFSNVMICETKARKSSGQPGRLPPPTLAPPQPPLPETIERPVGTGAMVARSSDLPYLIVGVVLGSIVLIIVTFIPFCLWRAWSKQKHTTDLGFPRSALPPSCPYTMVPLGGLPGHQASGQPYLSGISGRACANGIHMNRGCPSAAVGYPGMKPQQHCPGELQQQSDTSSLLRQTHLGNGYDPQSHQITRGPKSSPDEGSFLYTLPDDSTHQLLQPHHDCCQRQEQPAAVGQSGVRRAPDSPVLEAVWDPPFHSGPPCCLGLVPVEEVDSPDSCQVSGGDWCPQHPVGAYVGQEPGMQLSPGPLVRVSFETPPLTI.

Positions 1–30 (MLRGTMTAWRGMRPEVTLACLLLATAGCFA) are cleaved as a signal peptide. Over 31–855 (DLNEVPQVTV…MVARSSDLPY (825 aa)) the chain is Extracellular. 4 Ig-like C2-type domains span residues 36 to 123 (PQVT…ATVT), 129 to 213 (DFKL…VKTS), 235 to 315 (PEAQ…VILY), and 323 to 409 (PEVT…LRTS). Disulfide bonds link Cys57-Cys106, Cys150-Cys200, Cys252-Cys299, and Cys344-Cys391. Asn65, Asn76, Asn98, Asn189, and Asn275 each carry an N-linked (GlcNAc...) asparagine glycan. The disordered stretch occupies residues 422 to 474 (ELATGTPPVSPSKLGNPEQMLRGQPALPRPPTSVGPASPQCPGEKGQGAPAEA). 3 Fibronectin type-III domains span residues 474-571 (APII…GRRP), 608-703 (APDR…VVSG), and 712-812 (PVAG…TKAR). N-linked (GlcNAc...) asparagine glycosylation occurs at Asn517. The tract at residues 577 to 615 (ASKEQQIQRDDPGASPQSSSQPDHGRLSPPEAPDRPTIS) is disordered. N-linked (GlcNAc...) asparagine glycosylation is found at Asn725 and Asn759. The disordered stretch occupies residues 812–833 (RKSSGQPGRLPPPTLAPPQPPL). Positions 820–833 (RLPPPTLAPPQPPL) are enriched in pro residues. The chain crosses the membrane as a helical span at residues 856-876 (LIVGVVLGSIVLIIVTFIPFC). Topologically, residues 877-1114 (LWRAWSKQKH…VSFETPPLTI (238 aa)) are cytoplasmic. Residues 972 to 986 (QTHLGNGYDPQSHQI) show a composition bias toward polar residues. The tract at residues 972–998 (QTHLGNGYDPQSHQITRGPKSSPDEGS) is disordered.

As to quaternary structure, part of a complex that contains BOC, CDON, NEO1, cadherins and CTNNB1. Interacts with NTN3. Interacts with SHH, DHH and IHH. Interacts with CDH2 and CTNNB1. Interacts with CDH15 only during the early stages of myoblast differentiation. In terms of processing, N-glycosylated. As to expression, detected in skeletal muscle, heart, thymus, kidney and small intestine. Detected at lower levels in brain, placenta, lung and colon mucosa.

The protein resides in the cell membrane. Its function is as follows. Component of a cell-surface receptor complex that mediates cell-cell interactions between muscle precursor cells. Promotes differentiation of myogenic cells. The chain is Brother of CDO (BOC) from Homo sapiens (Human).